The chain runs to 620 residues: Toxin coregulated pilus biosynthesis protein I (620 aa).

One can recognise a Methyl-accepting transducer domain in the interval T344–R580.

This sequence belongs to the methyl-accepting chemotaxis (MCP) protein family.

The protein resides in the cell inner membrane. May function as an environmental regulator of TCP biogenesis. Negatively regulates the synthesis of the major pilin subunit of TCP (TcpA). The protein is Toxin coregulated pilus biosynthesis protein I (tcpI) of Vibrio cholerae serotype O1 (strain ATCC 39315 / El Tor Inaba N16961).